A 465-amino-acid chain; its full sequence is Lactaldehyde dehydrogenase (465 aa).

220 to 225 (GSVEIG) is a binding site for NAD(+). Catalysis depends on residues glutamate 240 and cysteine 274.

It belongs to the aldehyde dehydrogenase family. In terms of assembly, homotetramer.

The catalysed reaction is (S)-lactaldehyde + NAD(+) + H2O = (S)-lactate + NADH + 2 H(+). It participates in cofactor biosynthesis; coenzyme F420 biosynthesis. Involved in F420 biosynthesis through the oxidation of lactaldehyde to lactate. The protein is Lactaldehyde dehydrogenase of Methanococcus maripaludis (strain C7 / ATCC BAA-1331).